Reading from the N-terminus, the 720-residue chain is Polyribonucleotide nucleotidyltransferase (720 aa).

The Mg(2+) site is built by D485 and D491. Residues 552–615 (PRIHTIKINP…EAIRRIQALT (64 aa)) enclose the KH domain. In terms of domain architecture, S1 motif spans 621-689 (GRIYEGKVTR…RQGRIRLSIK (69 aa)). The disordered stretch occupies residues 697–720 (PAAESVAESAPAQEAVVEQVPMTE). Positions 698 to 720 (AAESVAESAPAQEAVVEQVPMTE) are enriched in low complexity.

The protein belongs to the polyribonucleotide nucleotidyltransferase family. As to quaternary structure, component of the RNA degradosome, which is a multiprotein complex involved in RNA processing and mRNA degradation. The cofactor is Mg(2+).

The protein resides in the cytoplasm. The enzyme catalyses RNA(n+1) + phosphate = RNA(n) + a ribonucleoside 5'-diphosphate. Involved in mRNA degradation. Catalyzes the phosphorolysis of single-stranded polyribonucleotides processively in the 3'- to 5'-direction. The sequence is that of Polyribonucleotide nucleotidyltransferase from Tolumonas auensis (strain DSM 9187 / NBRC 110442 / TA 4).